Here is a 367-residue protein sequence, read N- to C-terminus: Methylthioribose-1-phosphate isomerase (367 aa).

Residues arginine 48 to alanine 50, arginine 91, and glutamine 215 contribute to the substrate site. Residue aspartate 256 is the Proton donor of the active site. Asparagine 266–lysine 267 contacts substrate.

The protein belongs to the eIF-2B alpha/beta/delta subunits family. MtnA subfamily.

It catalyses the reaction 5-(methylsulfanyl)-alpha-D-ribose 1-phosphate = 5-(methylsulfanyl)-D-ribulose 1-phosphate. It participates in amino-acid biosynthesis; L-methionine biosynthesis via salvage pathway; L-methionine from S-methyl-5-thio-alpha-D-ribose 1-phosphate: step 1/6. Its function is as follows. Catalyzes the interconversion of methylthioribose-1-phosphate (MTR-1-P) into methylthioribulose-1-phosphate (MTRu-1-P). This chain is Methylthioribose-1-phosphate isomerase, found in Syntrophus aciditrophicus (strain SB).